Reading from the N-terminus, the 272-residue chain is Indole-3-glycerol phosphate synthase (272 aa).

The protein belongs to the TrpC family.

The enzyme catalyses 1-(2-carboxyphenylamino)-1-deoxy-D-ribulose 5-phosphate + H(+) = (1S,2R)-1-C-(indol-3-yl)glycerol 3-phosphate + CO2 + H2O. Its pathway is amino-acid biosynthesis; L-tryptophan biosynthesis; L-tryptophan from chorismate: step 4/5. In Arthrobacter sp. (strain FB24), this protein is Indole-3-glycerol phosphate synthase.